The chain runs to 340 residues: Undecaprenyl-phosphate 4-deoxy-4-formamido-L-arabinose transferase (340 aa).

Helical transmembrane passes span 235-255 (LSIV…ALIF) and 269-289 (LFVL…GMGL).

The protein belongs to the glycosyltransferase 2 family.

The protein resides in the cell inner membrane. It catalyses the reaction UDP-4-deoxy-4-formamido-beta-L-arabinose + di-trans,octa-cis-undecaprenyl phosphate = 4-deoxy-4-formamido-alpha-L-arabinopyranosyl di-trans,octa-cis-undecaprenyl phosphate + UDP. Its pathway is glycolipid biosynthesis; 4-amino-4-deoxy-alpha-L-arabinose undecaprenyl phosphate biosynthesis; 4-amino-4-deoxy-alpha-L-arabinose undecaprenyl phosphate from UDP-4-deoxy-4-formamido-beta-L-arabinose and undecaprenyl phosphate: step 1/2. It participates in bacterial outer membrane biogenesis; lipopolysaccharide biosynthesis. In terms of biological role, catalyzes the transfer of 4-deoxy-4-formamido-L-arabinose from UDP to undecaprenyl phosphate. The modified arabinose is attached to lipid A and is required for resistance to polymyxin and cationic antimicrobial peptides. The chain is Undecaprenyl-phosphate 4-deoxy-4-formamido-L-arabinose transferase from Pseudomonas fluorescens (strain Pf0-1).